A 185-amino-acid chain; its full sequence is Ribosome-recycling factor (185 aa).

This sequence belongs to the RRF family.

The protein resides in the cytoplasm. In terms of biological role, responsible for the release of ribosomes from messenger RNA at the termination of protein biosynthesis. May increase the efficiency of translation by recycling ribosomes from one round of translation to another. This is Ribosome-recycling factor from Serratia proteamaculans (strain 568).